A 146-amino-acid polypeptide reads, in one-letter code: Hemoglobin subunit beta (146 aa).

The residue at position 1 (Val1) is an N-acetylvaline. Residues 2–146 (HLTAEEKSLV…VANALAHKYH (145 aa)) enclose the Globin domain. A Phosphothreonine modification is found at Thr12. Ser44 is subject to Phosphoserine. N6-acetyllysine is present on Lys59. Residue His63 participates in heme b binding. Lys82 is subject to N6-acetyllysine. His92 serves as a coordination point for heme b. Cys93 bears the S-nitrosocysteine mark. Lys144 is subject to N6-acetyllysine.

It belongs to the globin family. As to quaternary structure, heterotetramer of two alpha chains and two beta chains. In terms of tissue distribution, red blood cells.

Functionally, involved in oxygen transport from the lung to the various peripheral tissues. This is Hemoglobin subunit beta (HBB) from Vulpes vulpes (Red fox).